We begin with the raw amino-acid sequence, 206 residues long: Holliday junction branch migration complex subunit RuvA (206 aa).

The segment at 1–64 is domain I; sequence MIGRLRGNLL…EDAQLLYGFN (64 aa). The domain II stretch occupies residues 65-143; it reads TKKERALFRE…GWGAGDLFTP (79 aa). Residues 144–157 form a flexible linker region; it reads ADTTSMDDASDLIS. A domain III region spans residues 158 to 206; that stretch reads SPQSAQDEAVSALISLGYKPVQASKMVSQVAKPDMTSESLIRESLKSMI.

The protein belongs to the RuvA family. In terms of assembly, homotetramer. Forms an RuvA(8)-RuvB(12)-Holliday junction (HJ) complex. HJ DNA is sandwiched between 2 RuvA tetramers; dsDNA enters through RuvA and exits via RuvB. An RuvB hexamer assembles on each DNA strand where it exits the tetramer. Each RuvB hexamer is contacted by two RuvA subunits (via domain III) on 2 adjacent RuvB subunits; this complex drives branch migration. In the full resolvosome a probable DNA-RuvA(4)-RuvB(12)-RuvC(2) complex forms which resolves the HJ.

The protein resides in the cytoplasm. In terms of biological role, the RuvA-RuvB-RuvC complex processes Holliday junction (HJ) DNA during genetic recombination and DNA repair, while the RuvA-RuvB complex plays an important role in the rescue of blocked DNA replication forks via replication fork reversal (RFR). RuvA specifically binds to HJ cruciform DNA, conferring on it an open structure. The RuvB hexamer acts as an ATP-dependent pump, pulling dsDNA into and through the RuvAB complex. HJ branch migration allows RuvC to scan DNA until it finds its consensus sequence, where it cleaves and resolves the cruciform DNA. The sequence is that of Holliday junction branch migration complex subunit RuvA from Aliivibrio salmonicida (strain LFI1238) (Vibrio salmonicida (strain LFI1238)).